The sequence spans 163 residues: Endoribonuclease YbeY (163 aa).

Zn(2+) is bound by residues His126, His130, and His136.

The protein belongs to the endoribonuclease YbeY family. It depends on Zn(2+) as a cofactor.

The protein localises to the cytoplasm. Single strand-specific metallo-endoribonuclease involved in late-stage 70S ribosome quality control and in maturation of the 3' terminus of the 16S rRNA. This is Endoribonuclease YbeY from Chelativorans sp. (strain BNC1).